The sequence spans 367 residues: MIRNWLTIFILFPLKLVEKCESSVSLTVPPVVKLENGSSTNVSLTLRPPLNATLVITFEITFRSKNITILELPDEVVVPPGVTNSSFQVTSQNVGQLTVYLHGNHSNQTGPRIRFLVIRSSAISIINQVIGWIYFVAWSISFYPQVIMNWRRKSVIGLSFDFVALNLTGFVAYSVFNIGLLWVPYIKEQFLLKYPNGVNPVNSNDVFFSLHAVVLTLIIIVQCCLYERGGQRVSWPAIGFLVLAWLFAFVTMIVAAVGVTTWLQFLFCFSYIKLAVTLVKYFPQAYMNFYYKSTEGWSIGNVLLDFTGGSFSLLQMFLQSYNNDQWTLIFGDPTKFGLGVFSIVFDVVFFIQHFCLYRKRPGYDQLN.

A signal peptide spans 1-22 (MIRNWLTIFILFPLKLVEKCES). Over 23-125 (SVSLTVPPVV…LVIRSSAISI (103 aa)) the chain is Lumenal. N-linked (GlcNAc...) (high mannose) asparagine glycosylation is found at asparagine 36, asparagine 41, and asparagine 51. Residue asparagine 66 is glycosylated (N-linked (GlcNAc...) asparagine). Asparagine 84, asparagine 104, and asparagine 107 each carry an N-linked (GlcNAc...) (high mannose) asparagine glycan. Residues 123 to 189 (ISIINQVIGW…LLWVPYIKEQ (67 aa)) form the PQ-loop 1 domain. The chain crosses the membrane as a helical span at residues 126–150 (INQVIGWIYFVAWSISFYPQVIMNW). Residues 151 to 159 (RRKSVIGLS) are Cytoplasmic-facing. The helical transmembrane segment at 160–179 (FDFVALNLTGFVAYSVFNIG) threads the bilayer. Asparagine 166 is a binding site for L-cystine. The Lumenal portion of the chain corresponds to 180–202 (LLWVPYIKEQFLLKYPNGVNPVN). Residues 203–225 (SNDVFFSLHAVVLTLIIIVQCCL) traverse the membrane as a helical segment. Aspartate 205 is a H(+) binding site. Residues 226–234 (YERGGQRVS) lie on the Cytoplasmic side of the membrane. The chain crosses the membrane as a helical span at residues 235–257 (WPAIGFLVLAWLFAFVTMIVAAV). Residues 258–263 (GVTTWL) are Lumenal-facing. The PQ-loop 2 domain occupies 263–328 (LQFLFCFSYI…QSYNNDQWTL (66 aa)). A helical membrane pass occupies residues 264-289 (QFLFCFSYIKLAVTLVKYFPQAYMNF). Lysine 273, lysine 280, and tyrosine 281 together coordinate L-cystine. The Cytoplasmic segment spans residues 290 to 298 (YYKSTEGWS). Residues 299–308 (IGNVLLDFTG) form a helical membrane-spanning segment. Residues asparagine 301 and aspartate 305 each contribute to the L-cystine site. Residue aspartate 305 coordinates H(+). The Lumenal portion of the chain corresponds to 309–331 (GSFSLLQMFLQSYNNDQWTLIFG). The helical transmembrane segment at 332–354 (DPTKFGLGVFSIVFDVVFFIQHF) threads the bilayer. H(+) is bound at residue aspartate 346. Over 355–367 (CLYRKRPGYDQLN) the chain is Cytoplasmic. The Lysosomal targeting motif signature appears at 362–366 (GYDQL).

It belongs to the cystinosin family. As to quaternary structure, interacts with components of the V-ATPase complex. Interacts with components of the Ragulator complex. Interacts with RRAGA/RagA and RRAGC/RagC. Interacts with AP-3 complex subunit mu (AP3M1 or AP3M2). Strongly expressed in pancreas, kidney (adult and fetal), skeletal muscle, melanocytes and keratinocytes. Expressed at lower levels in placenta and heart. Weakly expressed in lung, liver and brain (adult and fetal). In terms of tissue distribution, represents 5-20 % of CTNS transcripts, with the exception of the testis that expresses both isoforms in equal proportions.

The protein resides in the lysosome membrane. The protein localises to the melanosome membrane. It is found in the cell membrane. It carries out the reaction L-cystine(out) + H(+)(out) = L-cystine(in) + H(+)(in). With respect to regulation, switches between a lumen- and a cytosol-open conformation: pH induces conformational changes and shifts the equilibrium to facilitate the transition between the lumen- and cytosol-open conformation, thereby promoting cystine transport. Protonation of specific aspartate residues (Asp-205, Asp-305 and Asp-346) favors the cytosol-open conformation. Functionally, cystine/H(+) symporter that mediates export of cystine, the oxidized dimer of cysteine, from lysosomes. Plays an important role in melanin synthesis by catalyzing cystine export from melanosomes, possibly by inhibiting pheomelanin synthesis. In addition to cystine export, also acts as a positive regulator of mTORC1 signaling in kidney proximal tubular cells, via interactions with components of the v-ATPase and Ragulator complexes. Also involved in small GTPase-regulated vesicle trafficking and lysosomal localization of LAMP2A, independently of cystine transporter activity. The sequence is that of Cystinosin from Homo sapiens (Human).